We begin with the raw amino-acid sequence, 511 residues long: MMKMRWLSAAVMLTLYTSSSWAFSIDDVAKQAQSLAGKGYEAPKSNLPSVFRDMKYADYQQIQFNHDKAYWNNLKTPFKLEFYHQGMYFDTPVKINEVTATAVKRIKYSPDYFTFGDVQHDKDTVKDLGFAGFKVLYPINSKDKNDEIVSMLGASYFRVIGAGQVYGLSARGLAIDTALPSGEEFPRFKEFWIERPKPTDKRLTIYALLDSPRATGAYKFVVMPGRDTVVDVQSKIYLRDKVGKLGVAPLTSMFLFGPNQPSPANNYRPELHDSNGLSIHAGNGEWIWRPLNNPKHLAVSSFSMENPRGFGLLQRGRDFSRFEDLDDRYDLRPSAWVTPKGEWGKGSVELVEIPTNDETNDNIVAYWTPDQLPEPGKEMNFKYTITFSRDEDKLHAPDNAWVQQTRRSTGDVKQSNLIRQPDGTIAFVVDFTGAEMKKLPEDTPVTAQTSIGDNGEIVESTVRYNPVTKGWRLVMRVKVKDAKKITEMRAALVNADQTLSETWSYQLPANE.

The signal sequence occupies residues 1 to 22; the sequence is MMKMRWLSAAVMLTLYTSSSWA.

This sequence belongs to the OpgD/OpgG family.

It localises to the periplasm. It functions in the pathway glycan metabolism; osmoregulated periplasmic glucan (OPG) biosynthesis. Involved in the biosynthesis of osmoregulated periplasmic glucans (OPGs). This chain is Glucans biosynthesis protein G (mdoG), found in Shigella flexneri.